Reading from the N-terminus, the 263-residue chain is 3-methyl-2-oxobutanoate hydroxymethyltransferase (263 aa).

Asp-45 and Asp-84 together coordinate Mg(2+). Residues 45-46 (DS), Asp-84, and Lys-112 each bind 3-methyl-2-oxobutanoate. Glu-114 contacts Mg(2+). The active-site Proton acceptor is the Glu-181.

The protein belongs to the PanB family. In terms of assembly, homodecamer; pentamer of dimers. Requires Mg(2+) as cofactor.

It localises to the cytoplasm. It carries out the reaction 3-methyl-2-oxobutanoate + (6R)-5,10-methylene-5,6,7,8-tetrahydrofolate + H2O = 2-dehydropantoate + (6S)-5,6,7,8-tetrahydrofolate. It participates in cofactor biosynthesis; (R)-pantothenate biosynthesis; (R)-pantoate from 3-methyl-2-oxobutanoate: step 1/2. Catalyzes the reversible reaction in which hydroxymethyl group from 5,10-methylenetetrahydrofolate is transferred onto alpha-ketoisovalerate to form ketopantoate. This Chromohalobacter salexigens (strain ATCC BAA-138 / DSM 3043 / CIP 106854 / NCIMB 13768 / 1H11) protein is 3-methyl-2-oxobutanoate hydroxymethyltransferase.